A 122-amino-acid polypeptide reads, in one-letter code: Proline-rich protein 15 (122 aa).

A disordered region spans residues 1 to 122 (MADSGGSSPW…FPDDPQEDKQ (122 aa)). S39 bears the Phosphoserine mark. Residues 46 to 56 (TSSLPENQHSN) show a composition bias toward polar residues. A compositionally biased stretch (basic and acidic residues) spans 63-76 (ESLRSDKLCEEKTG). A compositionally biased stretch (basic residues) spans 80–97 (RNLKISRSGRFKEKRKMR). The segment covering 110 to 122 (EADFPDDPQEDKQ) has biased composition (acidic residues).

Belongs to the PRR15 family. Exhibits a cell type specific expression pattern only in the small and large intestine and in the testis. Along the intestinal tract expression is restricted to the non-proliferating epithelial cells surrounding the villi and no expression is found in the intestinal crypts, where proliferation occurs. In the testis, it is detected only in post-mitotic secondary spermatocytes.

In terms of biological role, may have a role in proliferation and/or differentiation. The sequence is that of Proline-rich protein 15 (Prr15) from Mus musculus (Mouse).